A 371-amino-acid chain; its full sequence is UDP-N-acetylglucosamine--N-acetylmuramyl-(pentapeptide) pyrophosphoryl-undecaprenol N-acetylglucosamine transferase (371 aa).

Residues 15–17 (TGG), asparagine 126, arginine 172, serine 199, isoleucine 256, 275–280 (ALTVSE), and glutamine 301 each bind UDP-N-acetyl-alpha-D-glucosamine.

Belongs to the glycosyltransferase 28 family. MurG subfamily.

The protein resides in the cell inner membrane. It catalyses the reaction di-trans,octa-cis-undecaprenyl diphospho-N-acetyl-alpha-D-muramoyl-L-alanyl-D-glutamyl-meso-2,6-diaminopimeloyl-D-alanyl-D-alanine + UDP-N-acetyl-alpha-D-glucosamine = di-trans,octa-cis-undecaprenyl diphospho-[N-acetyl-alpha-D-glucosaminyl-(1-&gt;4)]-N-acetyl-alpha-D-muramoyl-L-alanyl-D-glutamyl-meso-2,6-diaminopimeloyl-D-alanyl-D-alanine + UDP + H(+). It functions in the pathway cell wall biogenesis; peptidoglycan biosynthesis. Its function is as follows. Cell wall formation. Catalyzes the transfer of a GlcNAc subunit on undecaprenyl-pyrophosphoryl-MurNAc-pentapeptide (lipid intermediate I) to form undecaprenyl-pyrophosphoryl-MurNAc-(pentapeptide)GlcNAc (lipid intermediate II). The polypeptide is UDP-N-acetylglucosamine--N-acetylmuramyl-(pentapeptide) pyrophosphoryl-undecaprenol N-acetylglucosamine transferase (Francisella tularensis subsp. mediasiatica (strain FSC147)).